The sequence spans 389 residues: Protein Wnt-10b (389 aa).

The N-terminal stretch at 1-28 (MLEEPRPRPPPSGLAGLLFLALCSRALS) is a signal peptide. Threonine 46 is modified (phosphothreonine). Cystine bridges form between cysteine 83–cysteine 94, cysteine 136–cysteine 144, cysteine 146–cysteine 199, cysteine 247–cysteine 261, cysteine 249–cysteine 256, cysteine 318–cysteine 349, cysteine 334–cysteine 344, cysteine 348–cysteine 388, cysteine 364–cysteine 379, cysteine 366–cysteine 376, and cysteine 371–cysteine 372. An N-linked (GlcNAc...) asparagine glycan is attached at asparagine 93. The disordered stretch occupies residues 171–197 (KSFPHSLPSPGPGSSPSPGPQDTWEWG). Residues 177-189 (LPSPGPGSSPSPG) show a composition bias toward pro residues. Serine 253 carries O-palmitoleoyl serine; by PORCN lipidation. A glycan (N-linked (GlcNAc...) asparagine) is linked at asparagine 335.

Belongs to the Wnt family. As to quaternary structure, forms a soluble 1:1 complex with AFM; this prevents oligomerization and is required for prolonged biological activity. The complex with AFM may represent the physiological form in body fluids. Palmitoleoylation is required for efficient binding to frizzled receptors. Depalmitoleoylation leads to Wnt signaling pathway inhibition. As to expression, detected in most adult tissues. Highest levels were found in heart and skeletal muscle. Low levels are found in brain.

Its subcellular location is the secreted. It is found in the extracellular space. The protein resides in the extracellular matrix. Functionally, member of the Wnt ligand gene family that encodes for secreted proteins, which activate the Wnt signaling cascade. Specifically activates canonical Wnt/beta-catenin signaling and thus triggers beta-catenin/LEF/TCF-mediated transcriptional programs. Involved in signaling networks controlling stemness, pluripotency and cell fate decisions. Acts in the immune system, mammary gland, adipose tissue, bone and skin. The sequence is that of Protein Wnt-10b (WNT10B) from Homo sapiens (Human).